The sequence spans 330 residues: ADP-L-glycero-D-manno-heptose-6-epimerase (330 aa).

Residues 11 to 12 (FI), 32 to 33 (DN), Lys39, Lys54, 75 to 79 (EGACS), and Asn92 each bind NADP(+). Tyr139 serves as the catalytic Proton acceptor. An NADP(+)-binding site is contributed by Lys143. Asn168 is a substrate binding site. Residues Val169 and Lys177 each coordinate NADP(+). Lys177 acts as the Proton acceptor in catalysis. Residues Arg179, His186, 200–203 (FGEY), Arg213, and Tyr292 contribute to the substrate site.

It belongs to the NAD(P)-dependent epimerase/dehydratase family. HldD subfamily. In terms of assembly, homopentamer. The cofactor is NADP(+).

It carries out the reaction ADP-D-glycero-beta-D-manno-heptose = ADP-L-glycero-beta-D-manno-heptose. It functions in the pathway nucleotide-sugar biosynthesis; ADP-L-glycero-beta-D-manno-heptose biosynthesis; ADP-L-glycero-beta-D-manno-heptose from D-glycero-beta-D-manno-heptose 7-phosphate: step 4/4. In terms of biological role, catalyzes the interconversion between ADP-D-glycero-beta-D-manno-heptose and ADP-L-glycero-beta-D-manno-heptose via an epimerization at carbon 6 of the heptose. The protein is ADP-L-glycero-D-manno-heptose-6-epimerase of Burkholderia cenocepacia (strain ATCC BAA-245 / DSM 16553 / LMG 16656 / NCTC 13227 / J2315 / CF5610) (Burkholderia cepacia (strain J2315)).